We begin with the raw amino-acid sequence, 368 residues long: 3-dehydroquinate synthase (368 aa).

NAD(+)-binding positions include 69 to 74 (DGEAYK), 103 to 107 (GVIGD), 127 to 128 (TT), lysine 140, and lysine 149. Residues glutamate 182, histidine 245, and histidine 262 each contribute to the Zn(2+) site.

The protein belongs to the sugar phosphate cyclases superfamily. Dehydroquinate synthase family. The cofactor is Co(2+). Zn(2+) serves as cofactor. NAD(+) is required as a cofactor.

It localises to the cytoplasm. It catalyses the reaction 7-phospho-2-dehydro-3-deoxy-D-arabino-heptonate = 3-dehydroquinate + phosphate. Its pathway is metabolic intermediate biosynthesis; chorismate biosynthesis; chorismate from D-erythrose 4-phosphate and phosphoenolpyruvate: step 2/7. Its function is as follows. Catalyzes the conversion of 3-deoxy-D-arabino-heptulosonate 7-phosphate (DAHP) to dehydroquinate (DHQ). This chain is 3-dehydroquinate synthase, found in Pseudomonas paraeruginosa (strain DSM 24068 / PA7) (Pseudomonas aeruginosa (strain PA7)).